The chain runs to 396 residues: Gap junction gamma-1 protein (396 aa).

Residues 1 to 18 (MSWSFLTRLLEEIHNHST) are Cytoplasmic-facing. Residues 19–39 (FVGKIWLTVLIVFRIVLTAVG) traverse the membrane as a helical segment. The Extracellular portion of the chain corresponds to 40–75 (GESIYYDEQSKFVCNTEQPGCENVCYDAFAPLSHVR). A helical transmembrane segment spans residues 76-96 (FWVFQIILVATPSVMYLGYAI). Residues 97–175 (HKIAKMEHGE…RRIREDGLMK (79 aa)) lie on the Cytoplasmic side of the membrane. The interval 145-165 (ELESEKENKEQSQPKPKHDGR) is disordered. A compositionally biased stretch (basic and acidic residues) spans 147–156 (ESEKENKEQS). A helical transmembrane segment spans residues 176 to 198 (IYVLQLLARTVFEVGFLIGQYFL). Residues 199 to 229 (YGFQVHPFYVCSRLPCPHKIDCFISRPTEKT) are Extracellular-facing. The helical transmembrane segment at 230–250 (IFLLIMYGVTGLCLLLNIWEM) threads the bilayer. Topologically, residues 251 to 396 (LHLGFGTIRD…SGDGKTSVWI (146 aa)) are cytoplasmic. Positions 303 to 358 (ELSNAKIAYKQNKANIAQEQQYGSHEEHLPADLETLQREIRMAQERLDLAIQAYHH) form a coiled coil. Residues 357–396 (HHQNNPHGPREKKAKVGSKSGSNKSSISSKSGDGKTSVWI) form a disordered region. Over residues 373-396 (GSKSGSNKSSISSKSGDGKTSVWI) the composition is skewed to low complexity.

The protein belongs to the connexin family. Gamma-type subfamily. In terms of assembly, a connexon is composed of a hexamer of connexins. Interacts with CNST.

Its subcellular location is the cell membrane. The protein resides in the cell junction. The protein localises to the gap junction. One gap junction consists of a cluster of closely packed pairs of transmembrane channels, the connexons, through which materials of low MW diffuse from one cell to a neighboring cell. The chain is Gap junction gamma-1 protein (GJC1) from Cricetulus griseus (Chinese hamster).